Here is a 215-residue protein sequence, read N- to C-terminus: Protein ERP2 (215 aa).

A signal peptide spans 1–25; sequence MIKSTIALPSFFIVLILALVNSVAA. Residues 26 to 182 lie on the Lumenal side of the membrane; the sequence is SSSYAPVAIS…TVNSTESRLT (157 aa). A GOLD domain is found at 41–123; it reads KECLYYDMVT…LKKVEITLEK (83 aa). The chain crosses the membrane as a helical span at residues 183 to 203; the sequence is WLSILIIIIIAVISIAQVLLI. Residues 204 to 215 are Cytoplasmic-facing; the sequence is QFLFTGRQKNYV.

This sequence belongs to the EMP24/GP25L family. In terms of assembly, associates with EMP24, ERV25 and ERP1.

It is found in the endoplasmic reticulum membrane. In terms of biological role, involved in vesicular protein trafficking. The sequence is that of Protein ERP2 (ERP2) from Saccharomyces cerevisiae (strain ATCC 204508 / S288c) (Baker's yeast).